Consider the following 353-residue polypeptide: 4-hydroxy-3-methylbut-2-en-1-yl diphosphate synthase (flavodoxin) (353 aa).

Residues Cys265, Cys268, Cys300, and Glu307 each contribute to the [4Fe-4S] cluster site.

Belongs to the IspG family. It depends on [4Fe-4S] cluster as a cofactor.

The enzyme catalyses (2E)-4-hydroxy-3-methylbut-2-enyl diphosphate + oxidized [flavodoxin] + H2O + 2 H(+) = 2-C-methyl-D-erythritol 2,4-cyclic diphosphate + reduced [flavodoxin]. It participates in isoprenoid biosynthesis; isopentenyl diphosphate biosynthesis via DXP pathway; isopentenyl diphosphate from 1-deoxy-D-xylulose 5-phosphate: step 5/6. Functionally, converts 2C-methyl-D-erythritol 2,4-cyclodiphosphate (ME-2,4cPP) into 1-hydroxy-2-methyl-2-(E)-butenyl 4-diphosphate. The sequence is that of 4-hydroxy-3-methylbut-2-en-1-yl diphosphate synthase (flavodoxin) from Sulfurihydrogenibium sp. (strain YO3AOP1).